The chain runs to 240 residues: Uridylate kinase (240 aa).

12 to 15 contacts ATP; it reads KLSG. Position 54 (Gly-54) interacts with UMP. Residues Gly-55 and Arg-59 each coordinate ATP. Residues Asp-74 and 135 to 142 each bind UMP; that span reads TGNPFFTT. Thr-162, Tyr-168, and Asp-171 together coordinate ATP.

It belongs to the UMP kinase family. Homohexamer.

The protein localises to the cytoplasm. It catalyses the reaction UMP + ATP = UDP + ADP. The protein operates within pyrimidine metabolism; CTP biosynthesis via de novo pathway; UDP from UMP (UMPK route): step 1/1. With respect to regulation, inhibited by UTP. In terms of biological role, catalyzes the reversible phosphorylation of UMP to UDP. The chain is Uridylate kinase from Xanthomonas oryzae pv. oryzae (strain KACC10331 / KXO85).